Reading from the N-terminus, the 254-residue chain is tRNA 2'-phosphotransferase 1 (254 aa).

At Met-1 the chain carries N-acetylmethionine. 2 disordered regions span residues 1–30 (MNSFGGRRRETAGPKGRRAHRPPQDQDRDV) and 225–254 (RKPLSLAGNEEKEHQRDSKHSSRGRGMTQQ). The segment covering 233–244 (NEEKEHQRDSKH) has biased composition (basic and acidic residues).

The protein belongs to the KptA/TPT1 family.

It carries out the reaction 2'-phospho-[ligated tRNA] + NAD(+) = mature tRNA + ADP-alpha-D-ribose 1'',2''-cyclic phosphate + nicotinamide. Catalyzes the last step of tRNA splicing, the transfer of the splice junction 2'-phosphate from ligated tRNA to NAD to produce ADP-ribose 1''-2'' cyclic phosphate. In Bos taurus (Bovine), this protein is tRNA 2'-phosphotransferase 1 (TRPT1).